The sequence spans 483 residues: Sphingomyelin phosphodiesterase 5 (483 aa).

The interval 1 to 20 is disordered; sequence MSLPDISRRRSPVPQEDWPL. The helical transmembrane segment at 80-100 threads the bilayer; that stretch reads VLLPLVVVGLPLALVGLALWL. E209 contacts Mg(2+). Residue H471 is the Proton acceptor of the active site.

This sequence belongs to the neutral sphingomyelinase family. The cofactor is Mg(2+). It depends on Mn(2+) as a cofactor. In terms of tissue distribution, highly expressed in testis, pancreas, epididymis, and brain.

The protein resides in the mitochondrion inner membrane. It localises to the endoplasmic reticulum membrane. It catalyses the reaction a sphingomyelin + H2O = phosphocholine + an N-acylsphing-4-enine + H(+). The enzyme catalyses N-(hexadecanoyl)-sphing-4-enine-1-phosphocholine + H2O = N-hexadecanoylsphing-4-enine + phosphocholine + H(+). The protein operates within lipid metabolism; sphingolipid metabolism. With respect to regulation, activated by anionic phospholipids, specially cardiolipin and phosphatidylserine. Its function is as follows. Catalyzes the hydrolysis of membrane sphingomyelin to form phosphorylcholine and ceramide. The sequence is that of Sphingomyelin phosphodiesterase 5 from Mus musculus (Mouse).